Reading from the N-terminus, the 425-residue chain is MSYNSNPYNGGQYPPYNTYTRPNYSPNNGSQSNNTVHQYQPPRMPPPSTRPQTDGNSNQIPMENVGHISLSSANSHAYAPPSGPPPNTGANSYGNPNYSGPQLPNTQTQSYNLAGGGNFQYQYSTCQGKRKALLIGINYLNTQNELQGCINDVMSMSQLLIQRYGYKQEDMVIMTDTASNQRAIPTRQNMLDAMRWLVSDAQPNDALFFHYSGHGGQTKDLDGDEVDGYDETIYPLDHQYAGQIIDDEMHEIMVKPLPAGCRLTALFDSCHSGGALDLPFTYSTKGVLKEPNMLKESGMDVLHAGLSYASGDIMGAINNVKNIFTSATNGFNNNALQYSRQVKFSPADVISLSGCKDNQTSADTSVNGFATGALSYAFREVVTQNPQLSYLQLLRGIRQVLSNKYSQLPQLSCSHPLDMNLAMVL.

The interval 1–110 (MSYNSNPYNG…PQLPNTQTQS (110 aa)) is disordered. Residues 13–28 (YPPYNTYTRPNYSPNN) show a composition bias toward low complexity. Polar residues-rich tracts occupy residues 29 to 38 (GSQSNNTVHQ) and 88 to 110 (TGANSYGNPNYSGPQLPNTQTQS). Catalysis depends on residues H214 and C270.

Belongs to the peptidase C14B family.

Its subcellular location is the cytoplasm. The protein localises to the nucleus. Its function is as follows. Involved in cell death (apoptosis). This chain is Metacaspase-1 (pca1), found in Schizosaccharomyces pombe (strain 972 / ATCC 24843) (Fission yeast).